The sequence spans 539 residues: Putative dimethylaniline monooxygenase [N-oxide-forming] 6 (539 aa).

FAD is bound by residues 9 to 13 (GAGVS), Glu-32, 40 to 41 (LW), and 61 to 62 (NS). Residue 195-198 (SGSD) participates in NADP(+) binding. Residues 518–538 (FYNLLKMLSFPLLLLAVTLTF) traverse the membrane as a helical segment.

This sequence belongs to the FMO family. FAD is required as a cofactor.

The protein resides in the microsome membrane. It localises to the endoplasmic reticulum membrane. It catalyses the reaction N,N-dimethylaniline + NADPH + O2 + H(+) = N,N-dimethylaniline N-oxide + NADP(+) + H2O. Its function is as follows. It is probable that this protein is only produced in very small quantity or not at all as the gene coding for it seems to be unable to produce full-length transcripts. The sequence is that of Putative dimethylaniline monooxygenase [N-oxide-forming] 6 (FMO6P) from Homo sapiens (Human).